A 212-amino-acid polypeptide reads, in one-letter code: Thymidylate kinase (212 aa).

Glycine 10 to threonine 17 lines the ATP pocket.

Belongs to the thymidylate kinase family.

The enzyme catalyses dTMP + ATP = dTDP + ADP. Its function is as follows. Phosphorylation of dTMP to form dTDP in both de novo and salvage pathways of dTTP synthesis. The chain is Thymidylate kinase from Prochlorococcus marinus (strain MIT 9312).